The following is a 518-amino-acid chain: Centromere protein T (518 aa).

Residues 1-70 (MADLSSPDGD…RKHSHGTGSV (70 aa)) are disordered. Positions 19–28 (HVLDTADSHT) are enriched in basic and acidic residues. Positions 34–57 (STQTNPQRRRSQTPYSKRQGSQRK) are enriched in polar residues. Thr86 is modified (phosphothreonine). The flexible stalk domain stretch occupies residues 94–381 (ILLTAPESST…EPHQLFEPPP (288 aa)). Disordered stretches follow at residues 102-156 (STVM…KRKQ), 271-362 (VHHS…ELSS), and 375-412 (QLFE…HQDP). Positions 294–306 (TPSTGTRPQSQMS) are enriched in polar residues. Ser313, Ser324, Ser333, Ser345, Ser346, Ser357, and Ser382 each carry phosphoserine. The segment covering 326 to 343 (ELREAVGSKEAEEPKDLE) has biased composition (basic and acidic residues). Over residues 384-395 (GVAAVSSESVPA) the composition is skewed to low complexity.

This sequence belongs to the CENP-T/CNN1 family. Component of the CENPA-CAD complex, composed of CENPI, CENPK, CENPL, CENPO, CENPP, CENPQ, CENPR and CENPS. The CENPA-CAD complex is probably recruited on centromeres by the CENPA-NAC complex, at least composed of CENPA, CENPC, CENPH, CENPM, CENPN, CENPT and CENPU. Identified in a centromeric complex containing histones H2A, H2B, H3 and H4, and at least CENPA, CENPB, CENPC, CENPT, CENPN, HJURP, SUPT16H, SSRP1 and RSF1. Interacts (via N-terminus) with the NDC80 complex. Heterodimer with CENPW; this dimer coassembles with CENPS-CENPX heterodimers at centromeres to form the tetrameric CENP-T-W-S-X complex. Post-translationally, dynamically phosphorylated during the cell cycle. Phosphorylated during G2 phase, metaphase and anaphase, but not during telophase or G1 phase.

It is found in the nucleus. It localises to the chromosome. Its subcellular location is the centromere. The protein resides in the kinetochore. Its function is as follows. Component of the CENPA-NAC (nucleosome-associated) complex, a complex that plays a central role in assembly of kinetochore proteins, mitotic progression and chromosome segregation. The CENPA-NAC complex recruits the CENPA-CAD (nucleosome distal) complex and may be involved in incorporation of newly synthesized CENPA into centromeres. Part of a nucleosome-associated complex that binds specifically to histone H3-containing nucleosomes at the centromere, as opposed to nucleosomes containing CENPA. Component of the heterotetrameric CENP-T-W-S-X complex that binds and supercoils DNA, and plays an important role in kinetochore assembly. CENPT has a fundamental role in kinetochore assembly and function. It is one of the inner kinetochore proteins, with most further proteins binding downstream. Required for normal chromosome organization and normal progress through mitosis. This chain is Centromere protein T (Cenpt), found in Rattus norvegicus (Rat).